A 952-amino-acid polypeptide reads, in one-letter code: Valine--tRNA ligase (952 aa).

Positions 45-55 match the 'HIGH' region motif; that stretch reads PNVTGSLHMGH. A 'KMSKS' region motif is present at residues 571–575; the sequence is KMSKS. ATP is bound at residue Lys-574. The stretch at 894–950 forms a coiled coil; it reads KEIAKADADIARVDLKLADQNFIANAPGEIVEDEKEKREAAAARKAKFVEALERLKA.

Belongs to the class-I aminoacyl-tRNA synthetase family. ValS type 1 subfamily. As to quaternary structure, monomer.

The protein resides in the cytoplasm. The enzyme catalyses tRNA(Val) + L-valine + ATP = L-valyl-tRNA(Val) + AMP + diphosphate. Its function is as follows. Catalyzes the attachment of valine to tRNA(Val). As ValRS can inadvertently accommodate and process structurally similar amino acids such as threonine, to avoid such errors, it has a 'posttransfer' editing activity that hydrolyzes mischarged Thr-tRNA(Val) in a tRNA-dependent manner. The polypeptide is Valine--tRNA ligase (Nitrobacter winogradskyi (strain ATCC 25391 / DSM 10237 / CIP 104748 / NCIMB 11846 / Nb-255)).